Consider the following 261-residue polypeptide: Homeobox protein ceh-33 (261 aa).

A DNA-binding region (homeobox) is located at residues 133–192; it reads GEETSYCFRDKSRVLLRDWYCRNSYPSPREKRELAEKTHLTVTQVSNWFKNRRQRDRAGV.

The protein belongs to the SIX/Sine oculis homeobox family.

The protein resides in the nucleus. The protein is Homeobox protein ceh-33 (ceh-33) of Caenorhabditis elegans.